The following is a 277-amino-acid chain: MFHVKHPQREVAATRQRAVGQWPTDPYPRRLNVWPGIRDASMLDGMSAPLQKYSPCSATDKAAALALTPVSSETEARLDAYVDLLVQWQTKTNLVASSTLPQLWTRHIADSLQLLALAPQAKCWADLGSGGGFPGVVLACALADIEGARVDLVERNAKKAAFLREAVRITASPASVHLMDIGDYVDRSEDRIDCVTARALAPLQVLLGFVEPLVNKGAKALFLKGQDVEAELTEATRYWNIEPRIHSSCTGGQGRIAEFDHIERRDRRGARQAWRGS.

Residues glycine 128, phenylalanine 133, 188-189 (SE), and arginine 198 each bind S-adenosyl-L-methionine.

The protein belongs to the methyltransferase superfamily. RNA methyltransferase RsmG family.

It localises to the cytoplasm. The catalysed reaction is guanosine(527) in 16S rRNA + S-adenosyl-L-methionine = N(7)-methylguanosine(527) in 16S rRNA + S-adenosyl-L-homocysteine. Its function is as follows. Specifically methylates the N7 position of guanine in position 527 of 16S rRNA. In Nitrobacter winogradskyi (strain ATCC 25391 / DSM 10237 / CIP 104748 / NCIMB 11846 / Nb-255), this protein is Ribosomal RNA small subunit methyltransferase G.